The chain runs to 350 residues: Glycerol-1-phosphate dehydrogenase [NAD(P)+] (350 aa).

Residues 97-101 (GSKID) and 119-122 (TTPS) each bind NAD(+). Substrate is bound at residue D124. Residue S128 coordinates NAD(+). D171 provides a ligand contact to substrate. Residues D171 and H251 each coordinate Zn(2+). Position 255 (H255) interacts with substrate. Residue H267 participates in Zn(2+) binding.

It belongs to the glycerol-1-phosphate dehydrogenase family. Zn(2+) serves as cofactor.

The protein localises to the cytoplasm. The enzyme catalyses sn-glycerol 1-phosphate + NAD(+) = dihydroxyacetone phosphate + NADH + H(+). It catalyses the reaction sn-glycerol 1-phosphate + NADP(+) = dihydroxyacetone phosphate + NADPH + H(+). The protein operates within membrane lipid metabolism; glycerophospholipid metabolism. Catalyzes the NAD(P)H-dependent reduction of dihydroxyacetonephosphate (DHAP or glycerone phosphate) to glycerol 1-phosphate (G1P). The G1P thus generated is used as the glycerophosphate backbone of phospholipids in the cellular membranes of Archaea. This is Glycerol-1-phosphate dehydrogenase [NAD(P)+] from Picrophilus torridus (strain ATCC 700027 / DSM 9790 / JCM 10055 / NBRC 100828 / KAW 2/3).